A 1052-amino-acid polypeptide reads, in one-letter code: Isoleucine--tRNA ligase (1052 aa).

The short motif at 58–68 is the 'HIGH' region element; it reads PFANGLPHYGH. The short motif at 627–631 is the 'KMSKS' region element; sequence KMSKS. ATP is bound at residue Lys-630.

This sequence belongs to the class-I aminoacyl-tRNA synthetase family. IleS type 2 subfamily. Monomer. It depends on Zn(2+) as a cofactor.

The protein localises to the cytoplasm. It catalyses the reaction tRNA(Ile) + L-isoleucine + ATP = L-isoleucyl-tRNA(Ile) + AMP + diphosphate. Its function is as follows. Catalyzes the attachment of isoleucine to tRNA(Ile). As IleRS can inadvertently accommodate and process structurally similar amino acids such as valine, to avoid such errors it has two additional distinct tRNA(Ile)-dependent editing activities. One activity is designated as 'pretransfer' editing and involves the hydrolysis of activated Val-AMP. The other activity is designated 'posttransfer' editing and involves deacylation of mischarged Val-tRNA(Ile). The sequence is that of Isoleucine--tRNA ligase from Corynebacterium diphtheriae (strain ATCC 700971 / NCTC 13129 / Biotype gravis).